We begin with the raw amino-acid sequence, 1784 residues long: Sodium channel protein type 4 subunit alpha B (1784 aa).

Residues 1–130 (MARLLPPTGT…RAAIRILIHS (130 aa)) are Cytoplasmic-facing. A disordered region spans residues 29-48 (AEEAAEQERMKEQNVKVAEE). An I repeat occupies 112 to 429 (CLSPFNPVRR…VVAMAYAEQN (318 aa)). A helical membrane pass occupies residues 131 to 149 (LFSLVIMLTILTNCVFMAM). Residues 150 to 156 (SDPPGWS) are Extracellular-facing. Residues 157 to 177 (KILEYVFTGIYTFEAMVKVLS) traverse the membrane as a helical segment. The Cytoplasmic portion of the chain corresponds to 178 to 191 (RGFCIGDFTFLRDP). A helical membrane pass occupies residues 192–209 (WNWLDFMVISMAYLTEFV). At 210 to 215 (DLGNIS) the chain is on the extracellular side. Residue asparagine 213 is glycosylated (N-linked (GlcNAc...) asparagine). Residues 216–232 (ALRTFRVLRALKTITVI) traverse the membrane as a helical segment. At 233-251 (PGLKTIVGALIQSVKKLAD) the chain is on the cytoplasmic side. The chain crosses the membrane as a helical span at residues 252–271 (VMILTVFCLSVFALIGLQLF). Residues 272-366 (MGNLRQKCVL…PNYGYTSYDN (95 aa)) are Extracellular-facing. A disulfide bridge connects residues cysteine 279 and cysteine 335. Residues asparagine 291, asparagine 304, and asparagine 337 are each glycosylated (N-linked (GlcNAc...) asparagine). The cysteines at positions 344 and 350 are disulfide-linked. Positions 367–391 (FGWAFLALFRLMTQDFWENLFQLTL) form an intramembrane region, pore-forming. At 392-398 (RAAGKTY) the chain is on the extracellular side. The chain crosses the membrane as a helical span at residues 399–419 (MIFFVVIIFLGSFYLINLILA). Residues 420-568 (VVAMAYAEQN…RIVYLFVMDP (149 aa)) are Cytoplasmic-facing. Residues 455-478 (EQKNGMVNGSKTSLSSKKKGDNDQ) form a disordered region. The stretch at 550 to 821 (CCIPWVKFKR…QIAISRITRG (272 aa)) is one II repeat. A helical membrane pass occupies residues 569–587 (FVDLGITLCIVLNTVFMAM). The Extracellular portion of the chain corresponds to 588–598 (EHYPMSVHVEE). The helical transmembrane segment at 599–618 (VLAIGNLVFTGIFAAEMVLK) threads the bilayer. Over 619 to 632 (LIALDPYYYFQVGW) the chain is Cytoplasmic. Residues 633–652 (NIFDSIIVTMSLVELMLADV) traverse the membrane as a helical segment. Over 653 to 654 (EG) the chain is Extracellular. Residues 655-672 (LSVLRSFRLMRVFKLAKS) traverse the membrane as a helical segment. The Cytoplasmic segment spans residues 673–688 (WPTLNMLIKIIGNSVG). A helical membrane pass occupies residues 689–707 (ALGNLTLVLAIIVFIFAVV). The Extracellular portion of the chain corresponds to 708–736 (GMQLFGKSYTDSVCKISSDCELPRWHMAD). A disulfide bridge links cysteine 721 with cysteine 727. Positions 737-757 (FFHAFLIIFRVLCGEWIETMW) form an intramembrane region, pore-forming. Residues 758–768 (DCMEVAGQGMC) lie on the Extracellular side of the membrane. A disulfide bridge connects residues cysteine 759 and cysteine 768. The chain crosses the membrane as a helical span at residues 769 to 787 (IIVFMMVMVIGNLVVLNLF). The Cytoplasmic portion of the chain corresponds to 788 to 973 (LALLLSSFSG…TCFAIVEHSY (186 aa)). The tract at residues 870 to 928 (PIANGESDDDDGNGSSEDEDDEGRDINMKKKNGDESSTCSTVDKPPEVEDLVEEEEEDL) is disordered. The segment covering 875–892 (ESDDDDGNGSSEDEDDEG) has biased composition (acidic residues). Residues 893–903 (RDINMKKKNGD) are compositionally biased toward basic and acidic residues. Positions 917 to 928 (VEDLVEEEEEDL) are enriched in acidic residues. Residues 954–1269 (KGKAWWNFRK…KKYYNAMKKL (316 aa)) form an III repeat. Residues 974–991 (FETFIIFMILLSSGALAF) form a helical membrane-spanning segment. Residues 992–1004 (EDIYIEQRRMIKI) are Extracellular-facing. Residues 1005-1023 (ILEYADQVFTYVFVVEMLL) traverse the membrane as a helical segment. The Cytoplasmic portion of the chain corresponds to 1024 to 1037 (KWVAYGFKVYFTNA). A helical transmembrane segment spans residues 1038-1056 (WCWLDFLIVDVSLISLTAN). Topologically, residues 1057–1064 (ILGYSELG) are extracellular. Residues 1065 to 1083 (AIKSLRTLRALRPLRALSR) form a helical membrane-spanning segment. The Cytoplasmic portion of the chain corresponds to 1084-1101 (FEGMRVVVVNALVGAIPS). The chain crosses the membrane as a helical span at residues 1102-1121 (IFNVLLVCLIFWLIFSIMGV). The Extracellular segment spans residues 1122 to 1173 (NLFAGKFYYCFNETSEEVFDHNVVNNKTDCYELMEFHPEVRWMNGKINFDNV). Cysteine 1131 and cysteine 1151 are joined by a disulfide. N-linked (GlcNAc...) asparagine glycans are attached at residues asparagine 1133 and asparagine 1147. Residues 1174-1195 (GMGYLALLQVATFKGWMDIMYS) constitute an intramembrane region (pore-forming). At 1196 to 1212 (AVDSRAIESQPVYEANL) the chain is on the extracellular side. Residues 1213–1234 (YMYIYFVIFIIFGSFFTLNLFI) traverse the membrane as a helical segment. Over 1235 to 1297 (GVIIDNFNQQ…LVFDFVTQQF (63 aa)) the chain is Cytoplasmic. The interval 1253–1255 (IFM) is important for rapid channel inactivation. The IV repeat unit spans residues 1278–1575 (IPRPTNCCQG…WEKFDPTASQ (298 aa)). The chain crosses the membrane as a helical span at residues 1298-1315 (FDIFIMVMICLNMVTMMV). Topologically, residues 1316–1326 (ETDDQSAEIEE) are extracellular. A helical transmembrane segment spans residues 1327 to 1345 (ILFYINFAFIILFTGECVL). The Cytoplasmic segment spans residues 1346–1357 (KITALRYHYFSI). A helical membrane pass occupies residues 1358–1375 (GWNIFDFVVVILSILGIG). Residues 1376–1388 (LADLIEKYFVSPT) are Extracellular-facing. A helical membrane pass occupies residues 1389-1405 (LFRVIRLARIGRVLRLI). Residues 1406–1424 (RGAKGIRTLLFALMMSLPA) lie on the Cytoplasmic side of the membrane. The chain crosses the membrane as a helical span at residues 1425–1442 (LFNIGLLLFLIMFIFSIF). The Extracellular segment spans residues 1443–1464 (GMSNFAYVKKEVGIDDMMNFET). An intramembrane region (pore-forming) is located at residues 1465 to 1487 (FGNSIICMFMITTSAGWDGLLAP). Residues 1488–1516 (ILNSPPDCDPDVDNPGSTTRGNCGNAAVG) lie on the Extracellular side of the membrane. Residues cysteine 1495 and cysteine 1510 are joined by a disulfide bond. A helical transmembrane segment spans residues 1517-1539 (IVFFCSYIVMSFLVVVNMYIAII). Over 1540 to 1784 (LENFNVATEE…AADNLRESIV (245 aa)) the chain is Cytoplasmic. Residues 1669–1698 (EEVAASTIQRAYRSHILKRCVKQASYMYRD) enclose the IQ domain.

This sequence belongs to the sodium channel (TC 1.A.1.10) family. Nav1.4/SCN4A subfamily. Voltage-gated sodium (Nav) channels consist of an ion-conducting alpha subunit which is functional on its own associated with regulatory beta subunits. Lacks the cysteine which covalently binds the conotoxin GVIIJ. This cysteine (position 719) is speculated in other sodium channel subunits alpha to be implied in covalent binding with the sodium channel subunit beta-2 or beta-4. In terms of tissue distribution, expressed in skeletal muscle, heart, brain, spinal cord, and eye.

It localises to the cell membrane. The enzyme catalyses Na(+)(in) = Na(+)(out). Pore-forming subunit of a voltage-gated sodium (Nav) channel that directly mediates the depolarizing phase of action potentials in excitable membranes. Navs, also called VGSCs (voltage-gated sodium channels) or VDSCs (voltage-dependent sodium channels), operate by switching between closed and open conformations depending on the voltage difference across the membrane. In the open conformation they allow Na(+) ions to selectively pass through the pore, along their electrochemical gradient. The influx of Na+ ions provokes membrane depolarization, initiating the propagation of electrical signals throughout cells and tissues. The polypeptide is Sodium channel protein type 4 subunit alpha B (scn4ab) (Danio rerio (Zebrafish)).